The primary structure comprises 296 residues: Trimeric intracellular cation channel type A (296 aa).

Residues 1-19 (MELPGALQLGELAAAFASV) are Lumenal-facing. A helical transmembrane segment spans residues 20 to 37 (PVFPLFDAAYFIVSVLYL). Over 38 to 51 (KYEPGAVEMSRKSP) the chain is Cytoplasmic. Residues 52-73 (FASWLCAMLHCFGSYILADLLL) form a helical membrane-spanning segment. G74 is a binding site for Ca(2+). The Lumenal segment spans residues 74–85 (GESPIHYFSNNS). Residues 86-103 (SVILATAVWYLIFFCPMN) form a helical membrane-spanning segment. At 104–107 (LFYK) the chain is on the cytoplasmic side. A helical transmembrane segment spans residues 108–126 (CVSFLPVKLIFVAMKEVVR). Residues K122 and R126 each coordinate a 1,2-diacyl-sn-glycero-3-phospho-(1D-myo-inositol-4,5-bisphosphate). The Lumenal portion of the chain corresponds to 127 to 144 (VRKIAAGVHHAHHQYHHG). Residues 145-162 (WFIMMATGWVKGSGVALM) form a helical membrane-spanning segment. Residues 163–183 (SNFEQLLRGVWRPETNEILHM) are Cytoplasmic-facing. The helical transmembrane segment at 184-201 (SFPTKASLYGTVLFTLQQ) threads the bilayer. Over 202–209 (THWLPVSE) the chain is Lumenal. A helical membrane pass occupies residues 210–230 (ANLVFFFTMFMIVCKVFMTAT). Residues 231-273 (HSHASPFAPVEGFICPVFFGSVSSGHTSHHNQHGHSHEASYQP) are Cytoplasmic-facing. The segment at 256–296 (HTSHHNQHGHSHEASYQPPPPVKSKEELNEGTRKRKAKKAE) is disordered. Residues 278–287 (KSKEELNEGT) show a composition bias toward basic and acidic residues.

The protein belongs to the TMEM38 family. Homotrimer; conformation seems to be controled by binding to diacylglycerol (DAG).

The protein localises to the sarcoplasmic reticulum membrane. It localises to the nucleus membrane. The enzyme catalyses K(+)(in) = K(+)(out). With respect to regulation, channel activity is activated by a change of voltage within the sarcoplasmic reticulum lumen and blocked by luminal high Ca(2+) levels. Functionally, intracellular monovalent cation channel required for maintenance of rapid intracellular calcium release. Acts as a potassium counter-ion channel that functions in synchronization with calcium release from intracellular stores. Opened by a change of voltage within the sarcoplasmic reticulum lumen. This is Trimeric intracellular cation channel type A (TMEM38A) from Gallus gallus (Chicken).